Reading from the N-terminus, the 238-residue chain is MSEVTTAEFNEEGKYLRKIRSFVLREGRLTKGQAQAIESQWPTMGLDYSPTPLVLSDVFGREADTVLEIGFGMGASLVQMAKDAPEQNFIGIEVHKPGVGSCLSDAAIAGVTNLRVYHHDAMEVLEHAIADGSLARVQLFFPDPWHKKRHHKRRIVQAEFAELIRRKLKIGGVFHMATDWEEYSEHMLEVMQAAPGYKNQSSDGTVVPRPDHRPLTKFEARGHRLGHGVWDLMFERIA.

Positions 68, 93, 120, and 143 each coordinate S-adenosyl-L-methionine. Asp-143 is an active-site residue. Substrate is bound by residues Lys-147, Asp-179, and 216–219 (TKFE).

The protein belongs to the class I-like SAM-binding methyltransferase superfamily. TrmB family.

It catalyses the reaction guanosine(46) in tRNA + S-adenosyl-L-methionine = N(7)-methylguanosine(46) in tRNA + S-adenosyl-L-homocysteine. It functions in the pathway tRNA modification; N(7)-methylguanine-tRNA biosynthesis. Catalyzes the formation of N(7)-methylguanine at position 46 (m7G46) in tRNA. The protein is tRNA (guanine-N(7)-)-methyltransferase of Shewanella baltica (strain OS223).